A 360-amino-acid polypeptide reads, in one-letter code: MTAKTPLHTTHLACGAKMVDFHGWDMPLHYGSQLNEHHAVRNDAGMFDVSHMTIVDILGAGGRQFLRKLLTNDVDQITHNGKALYSCMCNEHGGIIDDLIVYQRASDNYRVVLNSATRQNDVAWIRAKSEGFAVGLQERRELSMLAVQGPNAIAKTLSILAPAHVDAVSTLTPFECVDVDHWFFARTGYTGEDGLEIIVPNEFITQLWNDLLNAGVTPCGLGARDTLRLEAGMLLYGQDMDETTTPLESGLAWTVKWEPEDRGFIGMGALVSQKQQGIKRKMVGLTLLDKGIMRHGQKVIIEGCPDGIITSGSYSPTLQQSIALARVPVETGEQVLVDIRGKLIPAKVGKPRFIKQGKPV.

This sequence belongs to the GcvT family. The glycine cleavage system is composed of four proteins: P, T, L and H.

The catalysed reaction is N(6)-[(R)-S(8)-aminomethyldihydrolipoyl]-L-lysyl-[protein] + (6S)-5,6,7,8-tetrahydrofolate = N(6)-[(R)-dihydrolipoyl]-L-lysyl-[protein] + (6R)-5,10-methylene-5,6,7,8-tetrahydrofolate + NH4(+). In terms of biological role, the glycine cleavage system catalyzes the degradation of glycine. The chain is Aminomethyltransferase from Legionella pneumophila (strain Corby).